We begin with the raw amino-acid sequence, 185 residues long: Peptidoglycan-recognition protein SC1a (185 aa).

The signal sequence occupies residues M1–G21. One can recognise an N-acetylmuramoyl-L-alanine amidase domain in the interval S46 to G170. H51 contacts Zn(2+). C58 and C64 form a disulfide bridge. Residues H160 and C168 each coordinate Zn(2+).

It belongs to the N-acetylmuramoyl-L-alanine amidase 2 family. The cofactor is Zn(2+).

It localises to the secreted. It carries out the reaction Hydrolyzes the link between N-acetylmuramoyl residues and L-amino acid residues in certain cell-wall glycopeptides.. In terms of biological role, N-acetylmuramyl-L-alanine amidase involved in innate immunity by degrading bacterial peptidoglycans (PGN). Plays a scavenger role by digesting biologically active PGN into biologically inactive fragments. Has no direct bacteriolytic activity. The polypeptide is Peptidoglycan-recognition protein SC1a (Drosophila melanogaster (Fruit fly)).